The chain runs to 116 residues: Endoribonuclease toxin ChpB (116 aa).

Belongs to the PemK/MazF family. As to quaternary structure, homodimer, interacts with ChpS, which inhibits the endoribonuclease activity.

Stimulated in vitro in a concentration-dependent fashion by extracellular death factor (EDF, a quorum sensing pentapeptide sequence NNWNN, probably produced from the zwf gene product glucose-6-phosphate 1-dehydrogenase), which is able to overcome inhibition by cognate antitoxin ChpS. Functionally, toxic component of a type II toxin-antitoxin (TA) system. ChpB is a sequence-specific mRNA and (weak) tmRNA endoribonuclease that inhibits protein synthesis and induces bacterial stasis. Cleavage is independent of the ribosome. Cleavage occurs at ACY sequences where Y is not C. The endoribonuclease activity is not as strong as that of MazF. The endoribonuclease activity (a toxin) is inhibited by its labile cognate antitoxin ChpS. Toxicity results when the levels of ChpS decrease in the cell, leading to mRNA degradation. Both ChpS and ChpB probably bind to the promoter region of the chpS-chpB operon to autoregulate their synthesis. The sequence is that of Endoribonuclease toxin ChpB (chpB) from Escherichia coli (strain K12).